The chain runs to 196 residues: Pyridoxal 5'-phosphate synthase subunit PdxT (196 aa).

46–48 (GES) is an L-glutamine binding site. Cys-78 acts as the Nucleophile in catalysis. L-glutamine-binding positions include Arg-105 and 134-135 (IR). Active-site charge relay system residues include His-170 and Glu-172.

The protein belongs to the glutaminase PdxT/SNO family. In terms of assembly, in the presence of PdxS, forms a dodecamer of heterodimers. Only shows activity in the heterodimer.

It catalyses the reaction aldehydo-D-ribose 5-phosphate + D-glyceraldehyde 3-phosphate + L-glutamine = pyridoxal 5'-phosphate + L-glutamate + phosphate + 3 H2O + H(+). It carries out the reaction L-glutamine + H2O = L-glutamate + NH4(+). Its pathway is cofactor biosynthesis; pyridoxal 5'-phosphate biosynthesis. Functionally, catalyzes the hydrolysis of glutamine to glutamate and ammonia as part of the biosynthesis of pyridoxal 5'-phosphate. The resulting ammonia molecule is channeled to the active site of PdxS. This is Pyridoxal 5'-phosphate synthase subunit PdxT from Pelotomaculum thermopropionicum (strain DSM 13744 / JCM 10971 / SI).